The primary structure comprises 213 residues: Phosphoribosyl-dephospho-CoA transferase (213 aa).

Active-site residues include Asp-135 and Asp-137.

It belongs to the MdcG family.

The enzyme catalyses apo-[malonate decarboxylase ACP] + 2'-(5''-triphospho-alpha-D-ribosyl)-3'-dephospho-CoA = holo-[malonate decarboxylase ACP] + diphosphate. In terms of biological role, transfers 2'-(5-triphosphoribosyl)-3'-dephosphocoenzyme-A to the apo-[acyl-carrier-protein] of the malonate decarboxylase to yield holo-[acyl-carrier-protein]. This is Phosphoribosyl-dephospho-CoA transferase from Xanthomonas campestris pv. campestris (strain ATCC 33913 / DSM 3586 / NCPPB 528 / LMG 568 / P 25).